Consider the following 328-residue polypeptide: D-cysteine desulfhydrase (328 aa).

The residue at position 51 (lysine 51) is an N6-(pyridoxal phosphate)lysine.

Belongs to the ACC deaminase/D-cysteine desulfhydrase family. In terms of assembly, homodimer. It depends on pyridoxal 5'-phosphate as a cofactor.

The catalysed reaction is D-cysteine + H2O = hydrogen sulfide + pyruvate + NH4(+) + H(+). Its function is as follows. Catalyzes the alpha,beta-elimination reaction of D-cysteine and of several D-cysteine derivatives. It could be a defense mechanism against D-cysteine. In Shigella sonnei (strain Ss046), this protein is D-cysteine desulfhydrase.